A 426-amino-acid polypeptide reads, in one-letter code: Glutamyl-tRNA(Gln) amidotransferase subunit D (426 aa).

The region spanning 82-413 is the Asparaginase/glutaminase domain; that stretch reads KNISILSTGG…KDAKKLICKN (332 aa). Catalysis depends on residues threonine 92, threonine 168, aspartate 169, and lysine 245.

The protein belongs to the asparaginase 1 family. GatD subfamily. In terms of assembly, heterodimer of GatD and GatE.

The catalysed reaction is L-glutamyl-tRNA(Gln) + L-glutamine + ATP + H2O = L-glutaminyl-tRNA(Gln) + L-glutamate + ADP + phosphate + H(+). In terms of biological role, allows the formation of correctly charged Gln-tRNA(Gln) through the transamidation of misacylated Glu-tRNA(Gln) in organisms which lack glutaminyl-tRNA synthetase. The reaction takes place in the presence of glutamine and ATP through an activated gamma-phospho-Glu-tRNA(Gln). The GatDE system is specific for glutamate and does not act on aspartate. The protein is Glutamyl-tRNA(Gln) amidotransferase subunit D of Methanococcus vannielii (strain ATCC 35089 / DSM 1224 / JCM 13029 / OCM 148 / SB).